The sequence spans 242 residues: High mobility group protein homolog (242 aa).

2 consecutive DNA-binding regions (HMG box) follow at residues Pro-54–Lys-122 and Lys-126–Glu-197.

Its subcellular location is the host nucleus. In Acheta domesticus (House cricket), this protein is High mobility group protein homolog (EF1).